Consider the following 177-residue polypeptide: Large ribosomal subunit protein uL6 (177 aa).

It belongs to the universal ribosomal protein uL6 family. In terms of assembly, part of the 50S ribosomal subunit.

This protein binds to the 23S rRNA, and is important in its secondary structure. It is located near the subunit interface in the base of the L7/L12 stalk, and near the tRNA binding site of the peptidyltransferase center. This is Large ribosomal subunit protein uL6 from Proteus mirabilis (strain HI4320).